The following is a 628-amino-acid chain: Carbon monoxide dehydrogenase 1 (628 aa).

[4Fe-4S] cluster-binding residues include C44, C52, C53, C56, C61, and C75. Positions 266, 302, 340, 448, 478, and 519 each coordinate [Ni-4Fe-5S] cluster.

The protein belongs to the Ni-containing carbon monoxide dehydrogenase family. Homodimer. The cofactor is [4Fe-4S] cluster. [Ni-4Fe-5S] cluster serves as cofactor.

It carries out the reaction CO + 2 oxidized [2Fe-2S]-[ferredoxin] + H2O = 2 reduced [2Fe-2S]-[ferredoxin] + CO2 + 2 H(+). Functionally, CODH oxidizes carbon monoxide coupled, via CooF, to the reduction of a hydrogen cation by a hydrogenase (possibly CooH). This Methanosarcina mazei (strain ATCC BAA-159 / DSM 3647 / Goe1 / Go1 / JCM 11833 / OCM 88) (Methanosarcina frisia) protein is Carbon monoxide dehydrogenase 1 (cooS1).